A 2979-amino-acid chain; its full sequence is Polyketide synthase-nonribosomal peptide synthetase TwmB (2979 aa).

Positions 5–435 (GAEIAIIGSG…GTNAHAILES (431 aa)) constitute a Ketosynthase family 3 (KS3) domain. Active-site for beta-ketoacyl synthase activity residues include C176, H315, and H355. The interval 549–864 (VFTGQGAQWA…PYTGLFTRGV (316 aa)) is malonyl-CoA:ACP transacylase (MAT) domain. Catalysis depends on S643, which acts as the For malonyltransferase activity. The interval 936–1070 (HDLLGHLTPN…GRVRIHLGEA (135 aa)) is N-terminal hotdog fold. Positions 936–1234 (HDLLGHLTPN…ECVPFSRQTA (299 aa)) are dehydratase (DH) domain. One can recognise a PKS/mFAS DH domain in the interval 936-1235 (HDLLGHLTPN…CVPFSRQTAK (300 aa)). H968 functions as the Proton acceptor; for dehydratase activity in the catalytic mechanism. The tract at residues 1085–1235 (LVSVSEKKFY…CVPFSRQTAK (151 aa)) is C-terminal hotdog fold. The active-site Proton donor; for dehydratase activity is the D1141. The segment at 1387-1572 (NFTAHLAGIL…GIDTSTVEQP (186 aa)) is inactive methyltransferase (MT) domain. Positions 2098-2271 (TYWLVGLTGG…AASVMDIGAV (174 aa)) are ketoreductase (KR)domain. Positions 2380–2465 (RNNEEAYGIV…ELVDTATEAI (86 aa)) constitute a Carrier domain. An O-(pantetheine 4'-phosphoryl)serine modification is found at S2425. The disordered stretch occupies residues 2476-2497 (YPAEQTSSQNSDSGQDMASSFD). Residues 2479–2497 (EQTSSQNSDSGQDMASSFD) show a composition bias toward polar residues. Residues 2534–2970 (KSIPVSFTQA…MTLGQAALAE (437 aa)) form a condensation region.

In terms of assembly, interacts with TwmE. Pantetheine 4'-phosphate is required as a cofactor.

The catalysed reaction is 5-aminopentanoate + 7 malonyl-CoA + acetyl-CoA + 11 NADPH + 17 H(+) = wortmanamide A + 7 CO2 + 11 NADP(+) + 8 CoA + 6 H2O. The enzyme catalyses 5-aminopentanoate + 8 malonyl-CoA + acetyl-CoA + 13 NADPH + 20 H(+) = wortmanamide B + 8 CO2 + 13 NADP(+) + 9 CoA + 7 H2O. The protein operates within secondary metabolite biosynthesis. Functionally, polyketide synthase-nonribosomal peptide synthetase; part of the gene cluster that mediates the biosynthesis of wortmanamides A and B, reduced long-chain polyketides amidated with a specific omega-amino acid, 5-aminopentanoic acid (5PA). The PKS modules of TwmB are involved in the synthesis of the polyketide backbone, whereas the non-canonical C domain of TwmB is a bonafide condensation domain that specifically selects 5PA and catalyzes amidation to release polyketide chain. The C domain clearly prefers C16 and C18 fatty acyl substrates, which is consistent with simultaneous formation of both octaketide and nonaketide acyl amides wortmanamides A and B. Because TwmB lacks a designated enoylreductase (ER) domain, the required activity is provided the enoyl reductase TwmE. The roles of the remaining enzymes have still to be clarified. The sequence is that of Polyketide synthase-nonribosomal peptide synthetase TwmB from Talaromyces wortmannii (Penicillium wortmannii).